A 445-amino-acid polypeptide reads, in one-letter code: Methionine aminopeptidase 2 (445 aa).

The disordered stretch occupies residues 1–76 (MAAQVASGVG…KKKCTSKVQT (76 aa)). Basic residues predominate over residues 57-71 (AKKKKKKTKKKKKCT). His-195 is a binding site for substrate. Residues Asp-215, Asp-226, and His-295 each contribute to the a divalent metal cation site. His-303 is a substrate binding site. 2 residues coordinate a divalent metal cation: Glu-331 and Glu-426.

This sequence belongs to the peptidase M24A family. Methionine aminopeptidase eukaryotic type 2 subfamily. Requires Co(2+) as cofactor. Zn(2+) is required as a cofactor. Mn(2+) serves as cofactor. The cofactor is Fe(2+).

The protein resides in the cytoplasm. The catalysed reaction is Release of N-terminal amino acids, preferentially methionine, from peptides and arylamides.. Cotranslationally removes the N-terminal methionine from nascent proteins. The N-terminal methionine is often cleaved when the second residue in the primary sequence is small and uncharged (Met-Ala-, Cys, Gly, Pro, Ser, Thr, or Val). The protein is Methionine aminopeptidase 2 of Paracoccidioides lutzii (strain ATCC MYA-826 / Pb01) (Paracoccidioides brasiliensis).